The primary structure comprises 160 residues: Eosinophil cationic protein (160 aa).

Residues 1 to 27 form the signal peptide; that stretch reads MVPKLFTSQICLLLLLGLMGVEGSLHA. Residues 28-72 are required for nearly all of the bactericidal activities; partially involved in LPS-binding; it reads RPPQFTRAQWFAIQHISLNPPRCTIAMRVINNYRWRCKNQNTFLR. H42 functions as the Proton acceptor in the catalytic mechanism. Cystine bridges form between C50–C110, C64–C123, C82–C138, and C89–C98. At Y60 the chain carries 3'-nitrotyrosine. Residue 65-69 participates in substrate binding; the sequence is KNQNT. N84, N92, and N119 each carry an N-linked (GlcNAc...) asparagine glycan. The active-site Proton donor is H155.

This sequence belongs to the pancreatic ribonuclease family. Interacts with bacterial lipopolysaccharide (LPS) and lipoteichoic acid (LTA). In vitro interacts with phospholipid bilayers.

The protein resides in the secreted. Functionally, cytotoxin and helminthotoxin with low-efficiency ribonuclease activity. Possesses a wide variety of biological activities. Exhibits antibacterial activity. The polypeptide is Eosinophil cationic protein (RNASE3) (Gorilla gorilla gorilla (Western lowland gorilla)).